We begin with the raw amino-acid sequence, 282 residues long: Bifunctional protein FolD (282 aa).

NADP(+) is bound by residues 165–167 (GRS) and S190.

It belongs to the tetrahydrofolate dehydrogenase/cyclohydrolase family. As to quaternary structure, homodimer.

It carries out the reaction (6R)-5,10-methylene-5,6,7,8-tetrahydrofolate + NADP(+) = (6R)-5,10-methenyltetrahydrofolate + NADPH. It catalyses the reaction (6R)-5,10-methenyltetrahydrofolate + H2O = (6R)-10-formyltetrahydrofolate + H(+). It functions in the pathway one-carbon metabolism; tetrahydrofolate interconversion. Its function is as follows. Catalyzes the oxidation of 5,10-methylenetetrahydrofolate to 5,10-methenyltetrahydrofolate and then the hydrolysis of 5,10-methenyltetrahydrofolate to 10-formyltetrahydrofolate. This chain is Bifunctional protein FolD, found in Macrococcus caseolyticus (strain JCSC5402) (Macrococcoides caseolyticum).